A 357-amino-acid polypeptide reads, in one-letter code: Protein FAM118A (357 aa).

Methionine 1 is subject to N-acetylmethionine. Residues 30 to 46 traverse the membrane as a helical segment; the sequence is LLLVIGTGVSAAVAPGI. At serine 311 the chain carries Phosphoserine.

Belongs to the FAM118 family.

It localises to the membrane. The sequence is that of Protein FAM118A (Fam118a) from Mus musculus (Mouse).